The chain runs to 152 residues: Xanthine-guanine phosphoribosyltransferase (152 aa).

Residues 37 to 38 (RG), arginine 69, and 88 to 96 (DDLVDTGGT) contribute to the 5-phospho-alpha-D-ribose 1-diphosphate site. Arginine 69 provides a ligand contact to GMP. Position 89 (aspartate 89) interacts with Mg(2+). The guanine site is built by aspartate 92 and isoleucine 135. Aspartate 92 and isoleucine 135 together coordinate xanthine. GMP contacts are provided by residues 92-96 (DTGGT) and 134-135 (WI).

It belongs to the purine/pyrimidine phosphoribosyltransferase family. XGPT subfamily. As to quaternary structure, homotetramer. Mg(2+) serves as cofactor.

It is found in the cell inner membrane. The catalysed reaction is GMP + diphosphate = guanine + 5-phospho-alpha-D-ribose 1-diphosphate. It catalyses the reaction XMP + diphosphate = xanthine + 5-phospho-alpha-D-ribose 1-diphosphate. It carries out the reaction IMP + diphosphate = hypoxanthine + 5-phospho-alpha-D-ribose 1-diphosphate. It functions in the pathway purine metabolism; GMP biosynthesis via salvage pathway; GMP from guanine: step 1/1. Its pathway is purine metabolism; XMP biosynthesis via salvage pathway; XMP from xanthine: step 1/1. In terms of biological role, purine salvage pathway enzyme that catalyzes the transfer of the ribosyl-5-phosphate group from 5-phospho-alpha-D-ribose 1-diphosphate (PRPP) to the N9 position of the 6-oxopurines guanine and xanthine to form the corresponding ribonucleotides GMP (guanosine 5'-monophosphate) and XMP (xanthosine 5'-monophosphate), with the release of PPi. To a lesser extent, also acts on hypoxanthine. This is Xanthine-guanine phosphoribosyltransferase from Photobacterium profundum (strain SS9).